The following is a 224-amino-acid chain: Cytidylate kinase (224 aa).

11–19 (GPAAAGKST) serves as a coordination point for ATP.

The protein belongs to the cytidylate kinase family. Type 1 subfamily.

Its subcellular location is the cytoplasm. It catalyses the reaction CMP + ATP = CDP + ADP. It carries out the reaction dCMP + ATP = dCDP + ADP. This chain is Cytidylate kinase, found in Listeria welshimeri serovar 6b (strain ATCC 35897 / DSM 20650 / CCUG 15529 / CIP 8149 / NCTC 11857 / SLCC 5334 / V8).